The chain runs to 354 residues: uncharacterized protein (354 aa).

The signal sequence occupies residues 1-21 (MFQKKTYAVFLILLLMMFTAA). Cys22 carries the N-palmitoyl cysteine lipid modification. Residue Cys22 is the site of S-diacylglycerol cysteine attachment.

Its subcellular location is the cell membrane. It is found in the membrane raft. This is an uncharacterized protein from Bacillus subtilis (strain 168).